Consider the following 409-residue polypeptide: Broad specificity amino-acid racemase (409 aa).

Residues M1 to A25 form the signal peptide. C72 and C98 are joined by a disulfide. The active-site Proton acceptor is the K76. K76 bears the N6-(pyridoxal phosphate)lysine mark. A substrate-binding site is contributed by R175. The active-site Proton acceptor is the Y301. A substrate-binding site is contributed by M349.

It belongs to the alanine racemase family. Bsr subfamily. Requires pyridoxal 5'-phosphate as cofactor.

The protein resides in the periplasm. The enzyme catalyses an L-alpha-amino acid = a D-alpha-amino acid. The catalysed reaction is L-lysine = D-lysine. It catalyses the reaction L-arginine = D-arginine. In terms of biological role, amino-acid racemase able to utilize a broad range of substrates. This chain is Broad specificity amino-acid racemase, found in Vibrio parahaemolyticus serotype O3:K6 (strain RIMD 2210633).